Reading from the N-terminus, the 288-residue chain is Light-independent protochlorophyllide reductase iron-sulfur ATP-binding protein (288 aa).

Residues 10 to 15 (GIGKST) and Lys-39 contribute to the ATP site. Position 14 (Ser-14) interacts with Mg(2+). The [4Fe-4S] cluster site is built by Cys-95 and Cys-129. 180–181 (NR) contributes to the ATP binding site.

It belongs to the NifH/BchL/ChlL family. Homodimer. Protochlorophyllide reductase is composed of three subunits; ChlL, ChlN and ChlB. [4Fe-4S] cluster is required as a cofactor.

It carries out the reaction chlorophyllide a + oxidized 2[4Fe-4S]-[ferredoxin] + 2 ADP + 2 phosphate = protochlorophyllide a + reduced 2[4Fe-4S]-[ferredoxin] + 2 ATP + 2 H2O. It functions in the pathway porphyrin-containing compound metabolism; chlorophyll biosynthesis (light-independent). Functionally, component of the dark-operative protochlorophyllide reductase (DPOR) that uses Mg-ATP and reduced ferredoxin to reduce ring D of protochlorophyllide (Pchlide) to form chlorophyllide a (Chlide). This reaction is light-independent. The L component serves as a unique electron donor to the NB-component of the complex, and binds Mg-ATP. The chain is Light-independent protochlorophyllide reductase iron-sulfur ATP-binding protein from Trichodesmium erythraeum (strain IMS101).